The primary structure comprises 485 residues: Ribosomal protein uS12 methylthiotransferase RimO (485 aa).

The 111-residue stretch at Pro14–Pro124 folds into the MTTase N-terminal domain. Residues Cys23, Cys59, Cys88, Cys167, Cys171, and Cys174 each contribute to the [4Fe-4S] cluster site. In terms of domain architecture, Radical SAM core spans Leu153–Glu389. Positions Ala392 to His468 constitute a TRAM domain.

This sequence belongs to the methylthiotransferase family. RimO subfamily. [4Fe-4S] cluster serves as cofactor.

Its subcellular location is the cytoplasm. It catalyses the reaction L-aspartate(89)-[ribosomal protein uS12]-hydrogen + (sulfur carrier)-SH + AH2 + 2 S-adenosyl-L-methionine = 3-methylsulfanyl-L-aspartate(89)-[ribosomal protein uS12]-hydrogen + (sulfur carrier)-H + 5'-deoxyadenosine + L-methionine + A + S-adenosyl-L-homocysteine + 2 H(+). In terms of biological role, catalyzes the methylthiolation of an aspartic acid residue of ribosomal protein uS12. In Deinococcus geothermalis (strain DSM 11300 / CIP 105573 / AG-3a), this protein is Ribosomal protein uS12 methylthiotransferase RimO.